A 338-amino-acid polypeptide reads, in one-letter code: Holliday junction branch migration complex subunit RuvB (338 aa).

The large ATPase domain (RuvB-L) stretch occupies residues 1–182 (MDDRMVDQSQ…FGVHLRLEYY (182 aa)). ATP is bound by residues Leu-21, Arg-22, Gly-63, Lys-66, Thr-67, Thr-68, 129 to 131 (EDF), Arg-172, Tyr-182, and Arg-219. Thr-67 serves as a coordination point for Mg(2+). The small ATPAse domain (RuvB-S) stretch occupies residues 183 to 253 (KESELKDIII…TTKRALQLLQ (71 aa)). The interval 256 to 338 (DYGLDYIDHK…KNGKRDNFEY (83 aa)) is head domain (RuvB-H). Residues Arg-292, Arg-311, and Arg-316 each coordinate DNA.

The protein belongs to the RuvB family. In terms of assembly, homohexamer. Forms an RuvA(8)-RuvB(12)-Holliday junction (HJ) complex. HJ DNA is sandwiched between 2 RuvA tetramers; dsDNA enters through RuvA and exits via RuvB. An RuvB hexamer assembles on each DNA strand where it exits the tetramer. Each RuvB hexamer is contacted by two RuvA subunits (via domain III) on 2 adjacent RuvB subunits; this complex drives branch migration. In the full resolvosome a probable DNA-RuvA(4)-RuvB(12)-RuvC(2) complex forms which resolves the HJ.

Its subcellular location is the cytoplasm. The enzyme catalyses ATP + H2O = ADP + phosphate + H(+). Its function is as follows. The RuvA-RuvB-RuvC complex processes Holliday junction (HJ) DNA during genetic recombination and DNA repair, while the RuvA-RuvB complex plays an important role in the rescue of blocked DNA replication forks via replication fork reversal (RFR). RuvA specifically binds to HJ cruciform DNA, conferring on it an open structure. The RuvB hexamer acts as an ATP-dependent pump, pulling dsDNA into and through the RuvAB complex. RuvB forms 2 homohexamers on either side of HJ DNA bound by 1 or 2 RuvA tetramers; 4 subunits per hexamer contact DNA at a time. Coordinated motions by a converter formed by DNA-disengaged RuvB subunits stimulates ATP hydrolysis and nucleotide exchange. Immobilization of the converter enables RuvB to convert the ATP-contained energy into a lever motion, pulling 2 nucleotides of DNA out of the RuvA tetramer per ATP hydrolyzed, thus driving DNA branch migration. The RuvB motors rotate together with the DNA substrate, which together with the progressing nucleotide cycle form the mechanistic basis for DNA recombination by continuous HJ branch migration. Branch migration allows RuvC to scan DNA until it finds its consensus sequence, where it cleaves and resolves cruciform DNA. This Staphylococcus carnosus (strain TM300) protein is Holliday junction branch migration complex subunit RuvB.